Here is a 407-residue protein sequence, read N- to C-terminus: Methylthioribose kinase (407 aa).

Residues asparagine 40, lysine 57, and 111-113 (EDL) each bind ATP. Aspartate 229 is a substrate binding site. Residue 246–248 (DAE) participates in ATP binding. Position 344 (arginine 344) interacts with substrate.

The protein belongs to the methylthioribose kinase family. Homodimer.

The catalysed reaction is 5-(methylsulfanyl)-D-ribose + ATP = 5-(methylsulfanyl)-alpha-D-ribose 1-phosphate + ADP + H(+). It participates in amino-acid biosynthesis; L-methionine biosynthesis via salvage pathway; S-methyl-5-thio-alpha-D-ribose 1-phosphate from S-methyl-5'-thioadenosine (hydrolase route): step 2/2. Its function is as follows. Catalyzes the phosphorylation of methylthioribose into methylthioribose-1-phosphate. The protein is Methylthioribose kinase of Yersinia pseudotuberculosis serotype IB (strain PB1/+).